We begin with the raw amino-acid sequence, 323 residues long: Aldo-keto reductase family 1 member C18 (323 aa).

NADP(+) contacts are provided by residues 20 to 24 (GFGTY) and D50. The active-site Proton donor is Y55. Residue H117 coordinates substrate. NADP(+) is bound by residues 166 to 167 (SN), Q190, 216 to 221 (YGALGT), and 270 to 280 (KSFNEERIREN).

The protein belongs to the aldo/keto reductase family. Monomer. Post-translationally, the N-terminus is blocked. In terms of tissue distribution, corpus luteum (large luteal cells).

The protein resides in the cytoplasm. It catalyses the reaction (17R,20S)-17,20-dihydroxypregn-4-en-3-one + NADP(+) = 17alpha-hydroxyprogesterone + NADPH + H(+). The enzyme catalyses (17R,20S)-17,20-dihydroxypregn-4-en-3-one + NAD(+) = 17alpha-hydroxyprogesterone + NADH + H(+). Its function is as follows. Catalyzes the conversion of progesterone into 20-alpha-dihydroprogesterone (20 alpha-OHP). The protein is Aldo-keto reductase family 1 member C18 (Akr1c18) of Rattus norvegicus (Rat).